The primary structure comprises 839 residues: Katanin p80 WD40 repeat-containing subunit B1 homolog KTN80.3 (839 aa).

WD repeat units follow at residues 14 to 54 (AHSA…AILS), 57 to 96 (GHSSGIDSVTFDASEGLVAAGAASGTIKLWDLEEAKVVRT), 99 to 138 (GHRSNCVSVNFHPFGEFFASGSLDTNLKIWDIRKKGCIHT), 141 to 182 (GHTR…HEFK), 184 to 222 (HEGKIQSLDFHPHEFLLATGSADKTVKFWDLETFELIGS), 225 to 265 (TETT…DGVD), and 267 to 304 (GWSNLSDMNVHEGKLLGCSYNQNCVGVWVVDLSRTEPM). Residues 115–131 (FFASGSLDTNLKIWDIR) carry the DWD box motif. Disordered regions lie at residues 303-340 (PMSGGATQSNSHPEKTSGSGRDQAGLNDNSSKVILGKL), 357-435 (GKLS…KSAS), 501-561 (LQSK…RTNK), and 575-648 (SLVR…PSNM). Polar residues-rich tracts occupy residues 307-334 (GATQSNSHPEKTSGSGRDQAGLNDNSSK), 375-385 (TGRSSVSQSSD), 411-435 (TLSSTGSVSDSPHRVTLTSAPKSAS), 501-533 (LQSKAADSRRLSSSRNEPDLPTSSLLERSQSQP), 589-602 (DLISYNANRDSSPT), and 630-648 (VSSSSGGNMTAPNSRPSNM).

It belongs to the WD repeat KATNB1 family. Component of KTN80-KTN1 complexes composed of a hexamer of KTN1-KTN80 heterodimers that sense microtubule (MT) geometry to confer precise MT severing. Interacts directly with AAA1/KTN1 and KTN80.1, and weakly with KTN80.4. Expressed in siliques, flowers, leaves, stems and roots.

Its subcellular location is the cytoplasm. The protein localises to the cytoskeleton. Functionally, may participate in a complex which severs microtubules in an ATP-dependent manner. Microtubule severing may promote rapid reorganization of cellular microtubule arrays. Confers precision to microtubule (MT) severing by specific targeting of KTN1 to MT cleavage sites such as crossover or branching nucleation sites. Together with other KTN80s, regulates cell elongation by modulating MT organization. This Arabidopsis thaliana (Mouse-ear cress) protein is Katanin p80 WD40 repeat-containing subunit B1 homolog KTN80.3.